Here is a 324-residue protein sequence, read N- to C-terminus: Succinylglutamate desuccinylase (324 aa).

Positions 53, 56, and 148 each coordinate Zn(2+). The active site involves Glu211.

Belongs to the AspA/AstE family. Succinylglutamate desuccinylase subfamily. Zn(2+) serves as cofactor.

The enzyme catalyses N-succinyl-L-glutamate + H2O = L-glutamate + succinate. The protein operates within amino-acid degradation; L-arginine degradation via AST pathway; L-glutamate and succinate from L-arginine: step 5/5. In terms of biological role, transforms N(2)-succinylglutamate into succinate and glutamate. The sequence is that of Succinylglutamate desuccinylase from Acinetobacter baumannii (strain AB0057).